Consider the following 215-residue polypeptide: Pyrrolidone-carboxylate peptidase (215 aa).

Residues Glu80, Cys143, and His167 contribute to the active site.

It belongs to the peptidase C15 family. In terms of assembly, homotetramer.

The protein localises to the cytoplasm. The catalysed reaction is Release of an N-terminal pyroglutamyl group from a polypeptide, the second amino acid generally not being Pro.. In terms of biological role, removes 5-oxoproline from various penultimate amino acid residues except L-proline. The sequence is that of Pyrrolidone-carboxylate peptidase from Bacillus cereus (strain 03BB102).